A 236-amino-acid chain; its full sequence is Uridylate kinase (236 aa).

An ATP-binding site is contributed by 10–13 (KLSG). Gly-52 contributes to the UMP binding site. The ATP site is built by Gly-53 and Arg-57. Residues Asp-72 and 133 to 140 (TGNPFFTT) each bind UMP. Thr-160, Tyr-166, and Asp-169 together coordinate ATP.

This sequence belongs to the UMP kinase family. Homohexamer.

The protein resides in the cytoplasm. It carries out the reaction UMP + ATP = UDP + ADP. It participates in pyrimidine metabolism; CTP biosynthesis via de novo pathway; UDP from UMP (UMPK route): step 1/1. Its activity is regulated as follows. Inhibited by UTP. In terms of biological role, catalyzes the reversible phosphorylation of UMP to UDP. This is Uridylate kinase from Bacteroides fragilis (strain ATCC 25285 / DSM 2151 / CCUG 4856 / JCM 11019 / LMG 10263 / NCTC 9343 / Onslow / VPI 2553 / EN-2).